Reading from the N-terminus, the 369-residue chain is Adenosine 3'-phospho 5'-phosphosulfate transporter 2 (369 aa).

Asparagine 39 carries N-linked (GlcNAc...) asparagine glycosylation. Helical transmembrane passes span 46-66, 79-99, 115-135, 138-158, 168-188, and 191-211; these read LTQFLICVAGVFVFYLIYGYL, YGWYLTLVQFAFYSVFGLIEL, MLIAFLTVGTMGLSNTSLGYL, PTQVIFKCCKLIPVMLGGVFI, VSAAVCMSLGLIWFTLADSTI, and NFNLTGVMLISLALCADAVIG. Asparagine 222 carries an N-linked (GlcNAc...) asparagine glycan. The next 4 helical transmembrane spans lie at 235–255, 266–285, 292–314, and 317–337; these read IGFVYILLGLSCTSGLGPAVA, GYAFLFSLTGYFGISFVLAL, LLAVTVTTGRKAMTVVLSFLFFA, and FTFQYIWSGLLVVLGIFLNVY.

It belongs to the nucleotide-sugar transporter family. SLC35B subfamily.

It is found in the golgi apparatus membrane. It carries out the reaction 3'-phosphoadenylyl sulfate(in) + adenosine 3',5'-bisphosphate(out) = 3'-phosphoadenylyl sulfate(out) + adenosine 3',5'-bisphosphate(in). Its function is as follows. Probably functions as a 3'-phosphoadenylyl sulfate:adenosine 3',5'-bisphosphate antiporter at the Golgi membranes. Mediates the transport from the cytosol into the lumen of the Golgi of 3'-phosphoadenylyl sulfate/adenosine 3'-phospho 5'-phosphosulfate (PAPS), a universal sulfuryl donor for sulfation events that take place in that compartment. The protein is Adenosine 3'-phospho 5'-phosphosulfate transporter 2 of Mus musculus (Mouse).